The following is a 510-amino-acid chain: Histidine ammonia-lyase (510 aa).

Positions 143–145 (ASG) form a cross-link, 5-imidazolinone (Ala-Gly). Ser144 bears the 2,3-didehydroalanine (Ser) mark.

The protein belongs to the PAL/histidase family. In terms of processing, contains an active site 4-methylidene-imidazol-5-one (MIO), which is formed autocatalytically by cyclization and dehydration of residues Ala-Ser-Gly.

It localises to the cytoplasm. It carries out the reaction L-histidine = trans-urocanate + NH4(+). It participates in amino-acid degradation; L-histidine degradation into L-glutamate; N-formimidoyl-L-glutamate from L-histidine: step 1/3. In Yersinia pseudotuberculosis serotype I (strain IP32953), this protein is Histidine ammonia-lyase.